Here is a 342-residue protein sequence, read N- to C-terminus: Ferrochelatase (342 aa).

Positions 188 and 268 each coordinate Fe cation.

This sequence belongs to the ferrochelatase family.

The protein resides in the cytoplasm. The enzyme catalyses heme b + 2 H(+) = protoporphyrin IX + Fe(2+). It functions in the pathway porphyrin-containing compound metabolism; protoheme biosynthesis; protoheme from protoporphyrin-IX: step 1/1. Functionally, catalyzes the ferrous insertion into protoporphyrin IX. The protein is Ferrochelatase of Rickettsia conorii (strain ATCC VR-613 / Malish 7).